An 863-amino-acid chain; its full sequence is Bifunctional uridylyltransferase/uridylyl-removing enzyme (863 aa).

The tract at residues 1 to 328 (MLFSPTLSSP…PSNQDTVIDQ (328 aa)) is uridylyltransferase. The tract at residues 329–687 (LDDDFQLINQ…ISNRFSLGGT (359 aa)) is uridylyl-removing. The region spanning 446 to 568 (VDEHTLRVML…VQNQVRLDYL (123 aa)) is the HD domain. ACT domains are found at residues 688–772 (EVFI…PNRQ) and 794–863 (QMEL…RNIG).

It belongs to the GlnD family. Requires Mg(2+) as cofactor.

It catalyses the reaction [protein-PII]-L-tyrosine + UTP = [protein-PII]-uridylyl-L-tyrosine + diphosphate. The catalysed reaction is [protein-PII]-uridylyl-L-tyrosine + H2O = [protein-PII]-L-tyrosine + UMP + H(+). Uridylyltransferase (UTase) activity is inhibited by glutamine, while glutamine activates uridylyl-removing (UR) activity. Functionally, modifies, by uridylylation and deuridylylation, the PII regulatory proteins (GlnB and homologs), in response to the nitrogen status of the cell that GlnD senses through the glutamine level. Under low glutamine levels, catalyzes the conversion of the PII proteins and UTP to PII-UMP and PPi, while under higher glutamine levels, GlnD hydrolyzes PII-UMP to PII and UMP (deuridylylation). Thus, controls uridylylation state and activity of the PII proteins, and plays an important role in the regulation of nitrogen assimilation and metabolism. The chain is Bifunctional uridylyltransferase/uridylyl-removing enzyme from Haemophilus influenzae (strain 86-028NP).